Here is a 984-residue protein sequence, read N- to C-terminus: Probable serine/threonine-protein kinase ireA (984 aa).

The first 26 residues, 1-26, serve as a signal peptide directing secretion; the sequence is MTFSKTRNKIIFLLFLIIINIFNINA. At 27–436 the chain is on the extracellular side; the sequence is YIKDENEDDL…NDLLDSNKLK (410 aa). 2 disordered regions span residues 70 to 91 and 137 to 157; these read YSTS…EITK and EDKS…DENK. Composition is skewed to low complexity over residues 82–91 and 141–150; these read STSTSTEITK and STSSTSTTSE. Residue asparagine 228 is glycosylated (N-linked (GlcNAc...) asparagine). A disordered region spans residues 352 to 427; the sequence is SPPSNNNNNN…GANNNNNNNN (76 aa). The segment covering 356–397 has biased composition (low complexity); the sequence is NNNNNNNNNNNNNNNNNNNNNNNNNNNNNNNNNNKNNNNNNK. Asparagine 398 carries an N-linked (GlcNAc...) asparagine glycan. The chain crosses the membrane as a helical span at residues 437–457; sequence NYDIYLYSSIVILITSIIVFI. Topologically, residues 458–984 are cytoplasmic; sequence RSKKNFNLIN…NDQYFVQYYY (527 aa). Residues 467–533 adopt a coiled-coil conformation; that stretch reads NVNNNNNQNN…NDLIDEFIST (67 aa). Over residues 472 to 489 the composition is skewed to low complexity; that stretch reads NNQNNNQNSNQNNNINNK. The tract at residues 472 to 518 is disordered; it reads NNQNNNQNSNQNNNINNKKTPKKKKKKQKNKNNKNNNDEDDENEIEN. The span at 490–503 shows a compositional bias: basic residues; it reads KTPKKKKKKQKNKN. Acidic residues predominate over residues 509 to 518; it reads DEDDENEIEN. One can recognise a Protein kinase domain in the interval 575 to 851; sequence IITNKILGTG…IGECINHPFF (277 aa). Residues 581–589 and lysine 603 each bind ATP; that span reads LGTGSCGTI. Over residues 667 to 676 the composition is skewed to polar residues; it reads PTDSPSIQSS. The segment at 667 to 692 is disordered; sequence PTDSPSIQSSNNNGNGNNGNNNNNNQ. Over residues 677–691 the composition is skewed to low complexity; sequence NNNGNGNNGNNNNNN. Residue aspartate 722 is the Proton acceptor of the active site. In terms of domain architecture, KEN spans 854–984; the sequence is VHKKLSFLVA…NDQYFVQYYY (131 aa).

The protein belongs to the protein kinase superfamily. Ser/Thr protein kinase family.

It is found in the membrane. It carries out the reaction L-seryl-[protein] + ATP = O-phospho-L-seryl-[protein] + ADP + H(+). The catalysed reaction is L-threonyl-[protein] + ATP = O-phospho-L-threonyl-[protein] + ADP + H(+). The protein is Probable serine/threonine-protein kinase ireA (ireA) of Dictyostelium discoideum (Social amoeba).